The primary structure comprises 264 residues: Hydroxyethylthiazole kinase (264 aa).

Met43 lines the substrate pocket. The ATP site is built by Arg119 and Thr165. Gly192 is a substrate binding site.

Belongs to the Thz kinase family. Mg(2+) is required as a cofactor.

It carries out the reaction 5-(2-hydroxyethyl)-4-methylthiazole + ATP = 4-methyl-5-(2-phosphooxyethyl)-thiazole + ADP + H(+). It participates in cofactor biosynthesis; thiamine diphosphate biosynthesis; 4-methyl-5-(2-phosphoethyl)-thiazole from 5-(2-hydroxyethyl)-4-methylthiazole: step 1/1. Functionally, catalyzes the phosphorylation of the hydroxyl group of 4-methyl-5-beta-hydroxyethylthiazole (THZ). This is Hydroxyethylthiazole kinase from Anoxybacillus flavithermus (strain DSM 21510 / WK1).